Here is a 282-residue protein sequence, read N- to C-terminus: PILR alpha-associated neural protein (282 aa).

An N-terminal signal peptide occupies residues 1-31 (MESRMWPALLLSHLLPLWPLLLLPLPPPAQG). Residues 28–99 (PAQGSSSSPR…PSGFEEGPPS (72 aa)) are disordered. Residues 32–178 (SSSSPRTPPA…FGGRGEGVDP (147 aa)) lie on the Extracellular side of the membrane. The segment covering 46–56 (PCARGGPSAPR) has biased composition (low complexity). A glycan (O-linked (GalNAc...) threonine) is linked at Thr140. A helical membrane pass occupies residues 179 to 199 (QLYVTITISIIIVLVATGIIF). The Cytoplasmic segment spans residues 200 to 282 (KFCWDRSQKR…QLNRIPLVNL (83 aa)). The interval 209 to 282 (RRRPSGQQGA…QLNRIPLVNL (74 aa)) is disordered. Residues 213–229 (SGQQGALRQEESQQPLT) are compositionally biased toward polar residues.

In terms of processing, O-glycosylation at Thr-140 is essential for recognition by PILRA. In terms of tissue distribution, mainly expressed in adult brain and cerebellum. Weaker expression in fetal brain and virtually no expression in spleen, heart, kidney, liver and dorsal ganglion relative to brain.

Its subcellular location is the membrane. Its function is as follows. Acts as a ligand for PILRA in neural tissues, where it may be involved in immune regulation. In Homo sapiens (Human), this protein is PILR alpha-associated neural protein (PIANP).